A 263-amino-acid chain; its full sequence is Small ribosomal subunit protein eS1 (263 aa).

Residues 236-254 (GDGKGGSDEPGARVDRPEG) are compositionally biased toward basic and acidic residues. The disordered stretch occupies residues 236–263 (GDGKGGSDEPGARVDRPEGYEPPVQETV).

It belongs to the eukaryotic ribosomal protein eS1 family. As to quaternary structure, component of the small ribosomal subunit. Mature ribosomes consist of a small (40S) and a large (60S) subunit. The 40S subunit contains about 33 different proteins and 1 molecule of RNA (18S). The 60S subunit contains about 49 different proteins and 3 molecules of RNA (28S, 5.8S and 5S).

Its subcellular location is the cytoplasm. The chain is Small ribosomal subunit protein eS1 from Periplaneta americana (American cockroach).